Consider the following 84-residue polypeptide: Small ribosomal subunit protein bS16 (84 aa).

This sequence belongs to the bacterial ribosomal protein bS16 family.

This Thioalkalivibrio sulfidiphilus (strain HL-EbGR7) protein is Small ribosomal subunit protein bS16.